Reading from the N-terminus, the 326-residue chain is Beta-ketoacyl-[acyl-carrier-protein] synthase III (326 aa).

Residues cysteine 112 and histidine 251 contribute to the active site. The segment at 252–256 is ACP-binding; it reads QANSR. The active site involves asparagine 281.

Belongs to the thiolase-like superfamily. FabH family. In terms of assembly, homodimer.

The protein resides in the cytoplasm. The enzyme catalyses malonyl-[ACP] + acetyl-CoA + H(+) = 3-oxobutanoyl-[ACP] + CO2 + CoA. It participates in lipid metabolism; fatty acid biosynthesis. In terms of biological role, catalyzes the condensation reaction of fatty acid synthesis by the addition to an acyl acceptor of two carbons from malonyl-ACP. Catalyzes the first condensation reaction which initiates fatty acid synthesis and may therefore play a role in governing the total rate of fatty acid production. Possesses both acetoacetyl-ACP synthase and acetyl transacylase activities. Its substrate specificity determines the biosynthesis of branched-chain and/or straight-chain of fatty acids. The polypeptide is Beta-ketoacyl-[acyl-carrier-protein] synthase III (Clostridium botulinum (strain Okra / Type B1)).